We begin with the raw amino-acid sequence, 269 residues long: Bifunctional protein FolD (269 aa).

NADP(+)-binding positions include 149–151 (GLG) and V215.

It belongs to the tetrahydrofolate dehydrogenase/cyclohydrolase family. In terms of assembly, homodimer.

The catalysed reaction is (6R)-5,10-methylene-5,6,7,8-tetrahydrofolate + NADP(+) = (6R)-5,10-methenyltetrahydrofolate + NADPH. It catalyses the reaction (6R)-5,10-methenyltetrahydrofolate + H2O = (6R)-10-formyltetrahydrofolate + H(+). Its pathway is one-carbon metabolism; tetrahydrofolate interconversion. In terms of biological role, catalyzes the oxidation of 5,10-methylenetetrahydrofolate to 5,10-methenyltetrahydrofolate and then the hydrolysis of 5,10-methenyltetrahydrofolate to 10-formyltetrahydrofolate. The polypeptide is Bifunctional protein FolD (Mycoplasma pneumoniae (strain ATCC 29342 / M129 / Subtype 1) (Mycoplasmoides pneumoniae)).